The following is a 288-amino-acid chain: Plasmodesmata-located protein 6 (288 aa).

Residues 1-22 (MFATKTVLFIAVVSLLGTFSSA) form the signal peptide. At 23-256 (AVDTFIYGGC…NNDDDEIEKT (234 aa)) the chain is on the extracellular side. Gnk2-homologous domains follow at residues 25 to 132 (DTFI…NTTF) and 137 to 234 (DKTV…ARGG). 6 disulfides stabilise this stretch: C32/C110, C84/C95, C98/C123, C145/C212, C188/C197, and C200/C225. A helical membrane pass occupies residues 257-277 (LAIIVGLIAGVTLLVVFLSFM). The interval 257–277 (LAIIVGLIAGVTLLVVFLSFM) is necessary and sufficient for plasmodesmal targeting. At 278 to 288 (AKSCERGKGGK) the chain is on the cytoplasmic side.

It belongs to the cysteine-rich repeat secretory protein family. Plasmodesmata-located proteins (PDLD) subfamily. (Microbial infection) Interacts with Grapevine fanleaf virus (GFLV) 2B-MP. Highly expressed in inflorescence silique (at mRNA level).

Its subcellular location is the cell membrane. It localises to the cell junction. The protein localises to the plasmodesma. Modulates cell-to-cell trafficking. The sequence is that of Plasmodesmata-located protein 6 from Arabidopsis thaliana (Mouse-ear cress).